The primary structure comprises 389 residues: Phospho-N-acetylmuramoyl-pentapeptide-transferase (389 aa).

Transmembrane regions (helical) follow at residues 25-45 (RAVMATVTALLIGLAAGPWVI), 73-93 (TMGGVLILIGIFISCILWADL), 97-117 (FIWIVMIVTFGFGLVGWVDDY), 134-154 (FFWQTLIGLFAAIYLAFSVSE), 190-210 (VSYPLGIMGFIILSYLVIVGS), 222-242 (GLVIMPVILVGAALGAFAYVM), 258-278 (GAGELMIFCGAMGGAGLAFLW), 286-306 (VFMGDVGALALGGALGTIAVI), 311-331 (IVLFVMGGIFVAETISVMLQV), and 366-386 (QVVVRFWIITILLVLIGLSSL).

It belongs to the glycosyltransferase 4 family. MraY subfamily. It depends on Mg(2+) as a cofactor.

It localises to the cell inner membrane. The catalysed reaction is UDP-N-acetyl-alpha-D-muramoyl-L-alanyl-gamma-D-glutamyl-meso-2,6-diaminopimeloyl-D-alanyl-D-alanine + di-trans,octa-cis-undecaprenyl phosphate = di-trans,octa-cis-undecaprenyl diphospho-N-acetyl-alpha-D-muramoyl-L-alanyl-D-glutamyl-meso-2,6-diaminopimeloyl-D-alanyl-D-alanine + UMP. The protein operates within cell wall biogenesis; peptidoglycan biosynthesis. In terms of biological role, catalyzes the initial step of the lipid cycle reactions in the biosynthesis of the cell wall peptidoglycan: transfers peptidoglycan precursor phospho-MurNAc-pentapeptide from UDP-MurNAc-pentapeptide onto the lipid carrier undecaprenyl phosphate, yielding undecaprenyl-pyrophosphoryl-MurNAc-pentapeptide, known as lipid I. The sequence is that of Phospho-N-acetylmuramoyl-pentapeptide-transferase from Polynucleobacter necessarius subsp. necessarius (strain STIR1).